We begin with the raw amino-acid sequence, 500 residues long: Glycerol kinase (500 aa).

Thr12 contacts ADP. 3 residues coordinate ATP: Thr12, Thr13, and Ser14. Thr12 provides a ligand contact to sn-glycerol 3-phosphate. Residue Arg16 coordinates ADP. Positions 82, 83, 134, and 243 each coordinate sn-glycerol 3-phosphate. 5 residues coordinate glycerol: Arg82, Glu83, Tyr134, Asp243, and Gln244. ADP contacts are provided by Thr265 and Gly308. Positions 265, 308, 312, and 411 each coordinate ATP. Gly411 provides a ligand contact to ADP.

It belongs to the FGGY kinase family.

The catalysed reaction is glycerol + ATP = sn-glycerol 3-phosphate + ADP + H(+). It functions in the pathway polyol metabolism; glycerol degradation via glycerol kinase pathway; sn-glycerol 3-phosphate from glycerol: step 1/1. Its activity is regulated as follows. Inhibited by fructose 1,6-bisphosphate (FBP). Its function is as follows. Key enzyme in the regulation of glycerol uptake and metabolism. Catalyzes the phosphorylation of glycerol to yield sn-glycerol 3-phosphate. This is Glycerol kinase from Chelativorans sp. (strain BNC1).